Consider the following 1256-residue polypeptide: Bifunctional autolysin (1256 aa).

A signal peptide spans Met-1 to Ala-29. Polar residues predominate over residues Gly-103–Gly-138. 3 disordered regions span residues Gly-103 to Asn-151, Lys-172 to Pro-219, and Thr-419 to Gly-440. Low complexity-rich tracts occupy residues Lys-172–Thr-196 and Ser-421–Thr-439. The interval Ala-199–Lys-775 is N-acetylmuramoyl-L-alanine amidase. 7 GW domains span residues Thr-443–Ala-517, Ser-519–Lys-593, Thr-612–Ala-686, Ser-688–Ala-762, Thr-784–Leu-859, Lys-861–Ala-936, and Ala-943–Ile-1017. The endo-beta-N-acetylglucosaminidase stretch occupies residues Ala-776–Lys-1256.

It in the N-terminal section; belongs to the N-acetylmuramoyl-L-alanine amidase 2 family. This sequence in the C-terminal section; belongs to the glycosyl hydrolase 73 family. As to quaternary structure, oligomer; forms a ring structure at the cell surface which is important for efficient partitioning of daughter cells after cell division. Undergoes proteolytic processing to generate the two extracellular lytic enzymes, probably at the septal region on the cell surface.

Its subcellular location is the secreted. It catalyses the reaction Hydrolyzes the link between N-acetylmuramoyl residues and L-amino acid residues in certain cell-wall glycopeptides.. The catalysed reaction is an N(4)-(oligosaccharide-(1-&gt;3)-[oligosaccharide-(1-&gt;6)]-beta-D-Man-(1-&gt;4)-beta-D-GlcNAc-(1-&gt;4)-alpha-D-GlcNAc)-L-asparaginyl-[protein] + H2O = an oligosaccharide-(1-&gt;3)-[oligosaccharide-(1-&gt;6)]-beta-D-Man-(1-&gt;4)-D-GlcNAc + N(4)-(N-acetyl-beta-D-glucosaminyl)-L-asparaginyl-[protein]. Its function is as follows. Endohydrolysis of the di-N-acetylchitobiosyl unit in high-mannose glycopeptides and glycoproteins containing the -[(Man)5(GlcNAc)2]-Asn structure. One N-acetyl-D-glucosamine residue remains attached to the protein; the rest of the oligosaccharide is released intact. Cleaves the peptidoglycan connecting the daughter cells at the end of the cell division cycle, resulting in the separation of the two newly divided cells. Acts as an autolysin in penicillin-induced lysis. The protein is Bifunctional autolysin (atl) of Staphylococcus aureus (strain COL).